Here is a 33-residue protein sequence, read N- to C-terminus: Protamine-1A (33 aa).

Positions 1–33 (PRRRRSSSRPVRRRRRPRRVSRRRRRRGGRRRR) are disordered.

In terms of tissue distribution, testis.

It localises to the nucleus. It is found in the chromosome. In terms of biological role, protamines substitute for histones in the chromatin of sperm during the haploid phase of spermatogenesis. They compact sperm DNA into a highly condensed, stable and inactive complex. This Oncorhynchus mykiss (Rainbow trout) protein is Protamine-1A.